Consider the following 657-residue polypeptide: Threonine--tRNA ligase (657 aa).

The TGS domain maps to 7–70 (QQASIAITLP…LCDANIEIVT (64 aa)). Residues 253–555 (DHRKLGTELE…LIEHTAGNFP (303 aa)) form a catalytic region. Zn(2+)-binding residues include Cys-351, His-402, and His-532.

Belongs to the class-II aminoacyl-tRNA synthetase family. As to quaternary structure, homodimer. Requires Zn(2+) as cofactor.

It localises to the cytoplasm. It catalyses the reaction tRNA(Thr) + L-threonine + ATP = L-threonyl-tRNA(Thr) + AMP + diphosphate + H(+). Its function is as follows. Catalyzes the attachment of threonine to tRNA(Thr) in a two-step reaction: L-threonine is first activated by ATP to form Thr-AMP and then transferred to the acceptor end of tRNA(Thr). Also edits incorrectly charged L-seryl-tRNA(Thr). In Chlorobium limicola (strain DSM 245 / NBRC 103803 / 6330), this protein is Threonine--tRNA ligase.